Consider the following 403-residue polypeptide: Tryptophan synthase beta chain (403 aa).

Lys87 bears the N6-(pyridoxal phosphate)lysine mark.

Belongs to the TrpB family. Tetramer of two alpha and two beta chains. Requires pyridoxal 5'-phosphate as cofactor.

It carries out the reaction (1S,2R)-1-C-(indol-3-yl)glycerol 3-phosphate + L-serine = D-glyceraldehyde 3-phosphate + L-tryptophan + H2O. Its pathway is amino-acid biosynthesis; L-tryptophan biosynthesis; L-tryptophan from chorismate: step 5/5. Its function is as follows. The beta subunit is responsible for the synthesis of L-tryptophan from indole and L-serine. In Shewanella loihica (strain ATCC BAA-1088 / PV-4), this protein is Tryptophan synthase beta chain.